Here is a 609-residue protein sequence, read N- to C-terminus: Glutamine--fructose-6-phosphate aminotransferase [isomerizing] (609 aa).

The Nucleophile; for GATase activity role is filled by Cys2. The Glutamine amidotransferase type-2 domain maps to 2 to 218 (CGIVGAVAQR…EGDVVEVTRR (217 aa)). 2 consecutive SIS domains span residues 286–426 (ADAL…LKGA) and 458–599 (LAEG…VDQP). Lys604 (for Fru-6P isomerization activity) is an active-site residue.

As to quaternary structure, homodimer.

Its subcellular location is the cytoplasm. The enzyme catalyses D-fructose 6-phosphate + L-glutamine = D-glucosamine 6-phosphate + L-glutamate. Functionally, catalyzes the first step in hexosamine metabolism, converting fructose-6P into glucosamine-6P using glutamine as a nitrogen source. The polypeptide is Glutamine--fructose-6-phosphate aminotransferase [isomerizing] (Yersinia pestis).